The primary structure comprises 855 residues: DNA mismatch repair protein MutS (855 aa).

616–623 (GPNMGGKS) serves as a coordination point for ATP.

The protein belongs to the DNA mismatch repair MutS family.

This protein is involved in the repair of mismatches in DNA. It is possible that it carries out the mismatch recognition step. This protein has a weak ATPase activity. The sequence is that of DNA mismatch repair protein MutS from Escherichia coli O139:H28 (strain E24377A / ETEC).